The following is a 776-amino-acid chain: 1,4-alpha-glucan branching enzyme GlgB (776 aa).

Asp-431 serves as the catalytic Nucleophile. Glu-484 acts as the Proton donor in catalysis.

Belongs to the glycosyl hydrolase 13 family. GlgB subfamily. As to quaternary structure, monomer.

The enzyme catalyses Transfers a segment of a (1-&gt;4)-alpha-D-glucan chain to a primary hydroxy group in a similar glucan chain.. It participates in glycan biosynthesis; glycogen biosynthesis. Catalyzes the formation of the alpha-1,6-glucosidic linkages in glycogen by scission of a 1,4-alpha-linked oligosaccharide from growing alpha-1,4-glucan chains and the subsequent attachment of the oligosaccharide to the alpha-1,6 position. This Trichodesmium erythraeum (strain IMS101) protein is 1,4-alpha-glucan branching enzyme GlgB.